A 303-amino-acid chain; its full sequence is Ferrochelatase (303 aa).

Residues His185 and Glu262 each coordinate Fe cation.

The protein belongs to the ferrochelatase family.

The protein localises to the cytoplasm. It catalyses the reaction heme b + 2 H(+) = protoporphyrin IX + Fe(2+). It functions in the pathway porphyrin-containing compound metabolism; protoheme biosynthesis; protoheme from protoporphyrin-IX: step 1/1. Catalyzes the ferrous insertion into protoporphyrin IX. The polypeptide is Ferrochelatase (Campylobacter jejuni (strain RM1221)).